A 379-amino-acid chain; its full sequence is UDP-4-amino-4-deoxy-L-arabinose--oxoglutarate aminotransferase (379 aa).

At Lys-182 the chain carries N6-(pyridoxal phosphate)lysine.

Belongs to the DegT/DnrJ/EryC1 family. ArnB subfamily. As to quaternary structure, homodimer. Requires pyridoxal 5'-phosphate as cofactor.

The enzyme catalyses UDP-4-amino-4-deoxy-beta-L-arabinose + 2-oxoglutarate = UDP-beta-L-threo-pentopyranos-4-ulose + L-glutamate. It participates in nucleotide-sugar biosynthesis; UDP-4-deoxy-4-formamido-beta-L-arabinose biosynthesis; UDP-4-deoxy-4-formamido-beta-L-arabinose from UDP-alpha-D-glucuronate: step 2/3. Its pathway is bacterial outer membrane biogenesis; lipopolysaccharide biosynthesis. Its function is as follows. Catalyzes the conversion of UDP-4-keto-arabinose (UDP-Ara4O) to UDP-4-amino-4-deoxy-L-arabinose (UDP-L-Ara4N). The modified arabinose is attached to lipid A and is required for resistance to polymyxin and cationic antimicrobial peptides. The sequence is that of UDP-4-amino-4-deoxy-L-arabinose--oxoglutarate aminotransferase from Shigella flexneri.